The chain runs to 435 residues: Pregnancy-specific beta-1-glycoprotein 6 (435 aa).

The signal sequence occupies residues 1–34 (MGPLSAPPCTQHITWKGLLLTASLLNFWNLPTTA). Residues 35–143 (QVIIEAKPPK…TGYFTVTLYS (109 aa)) enclose the Ig-like V-type domain. Asn-61, Asn-103, and Asn-110 each carry an N-linked (GlcNAc...) asparagine glycan. The short motif at 126 to 128 (RGD) is the Cell attachment site element. 3 Ig-like C2-type domains span residues 148–233 (PSIS…VTLN), 241–326 (PYIT…VTLN), and 334–405 (PRIY…KEIS). 3 cysteine pairs are disulfide-bonded: Cys-168-Cys-216, Cys-261-Cys-309, and Cys-353-Cys-393. Residues Asn-198, Asn-267, Asn-302, and Asn-386 are each glycosylated (N-linked (GlcNAc...) asparagine).

The protein belongs to the immunoglobulin superfamily. CEA family.

It is found in the secreted. The polypeptide is Pregnancy-specific beta-1-glycoprotein 6 (PSG6) (Homo sapiens (Human)).